The chain runs to 89 residues: Small ribosomal subunit protein uS17 (89 aa).

Belongs to the universal ribosomal protein uS17 family. Part of the 30S ribosomal subunit.

In terms of biological role, one of the primary rRNA binding proteins, it binds specifically to the 5'-end of 16S ribosomal RNA. In Ralstonia nicotianae (strain ATCC BAA-1114 / GMI1000) (Ralstonia solanacearum), this protein is Small ribosomal subunit protein uS17.